A 200-amino-acid chain; its full sequence is NADH-quinone oxidoreductase subunit C (200 aa).

This sequence belongs to the complex I 30 kDa subunit family. In terms of assembly, NDH-1 is composed of 14 different subunits. Subunits NuoB, C, D, E, F, and G constitute the peripheral sector of the complex.

Its subcellular location is the cell inner membrane. The enzyme catalyses a quinone + NADH + 5 H(+)(in) = a quinol + NAD(+) + 4 H(+)(out). Functionally, NDH-1 shuttles electrons from NADH, via FMN and iron-sulfur (Fe-S) centers, to quinones in the respiratory chain. The immediate electron acceptor for the enzyme in this species is believed to be ubiquinone. Couples the redox reaction to proton translocation (for every two electrons transferred, four hydrogen ions are translocated across the cytoplasmic membrane), and thus conserves the redox energy in a proton gradient. The protein is NADH-quinone oxidoreductase subunit C of Burkholderia vietnamiensis (strain G4 / LMG 22486) (Burkholderia cepacia (strain R1808)).